Here is a 287-residue protein sequence, read N- to C-terminus: ATP phosphoribosyltransferase (287 aa).

The protein belongs to the ATP phosphoribosyltransferase family. Long subfamily. The cofactor is Mg(2+).

Its subcellular location is the cytoplasm. The enzyme catalyses 1-(5-phospho-beta-D-ribosyl)-ATP + diphosphate = 5-phospho-alpha-D-ribose 1-diphosphate + ATP. It participates in amino-acid biosynthesis; L-histidine biosynthesis; L-histidine from 5-phospho-alpha-D-ribose 1-diphosphate: step 1/9. With respect to regulation, feedback inhibited by histidine. Functionally, catalyzes the condensation of ATP and 5-phosphoribose 1-diphosphate to form N'-(5'-phosphoribosyl)-ATP (PR-ATP). Has a crucial role in the pathway because the rate of histidine biosynthesis seems to be controlled primarily by regulation of HisG enzymatic activity. The sequence is that of ATP phosphoribosyltransferase (hisG) from Methanothermobacter thermautotrophicus (strain ATCC 29096 / DSM 1053 / JCM 10044 / NBRC 100330 / Delta H) (Methanobacterium thermoautotrophicum).